The primary structure comprises 323 residues: Protoheme IX farnesyltransferase (323 aa).

8 consecutive transmembrane segments (helical) span residues 28-48, 50-70, 101-121, 122-142, 150-170, 178-198, 235-255, and 282-302; these read IIPLLLITTAAAMWIASEGRV, LFTLFITLIGGTLAAAAAQVM, FIFAVILAILSFSLFALFVNL, LSGLLAMSGIVFYMLVYTHLL, IVIGGAAGSIPPLVGWAAVTG, ILFAIIFLWTPPHFWALALMI, FLLVYPLGVSGAVYGGIAIIL, and FSIFYLMLLCTAMVIDSLPLT.

It belongs to the UbiA prenyltransferase family. Protoheme IX farnesyltransferase subfamily.

It localises to the cell inner membrane. It carries out the reaction heme b + (2E,6E)-farnesyl diphosphate + H2O = Fe(II)-heme o + diphosphate. It functions in the pathway porphyrin-containing compound metabolism; heme O biosynthesis; heme O from protoheme: step 1/1. In terms of biological role, converts heme B (protoheme IX) to heme O by substitution of the vinyl group on carbon 2 of heme B porphyrin ring with a hydroxyethyl farnesyl side group. The protein is Protoheme IX farnesyltransferase of Rippkaea orientalis (strain PCC 8801 / RF-1) (Cyanothece sp. (strain PCC 8801)).